An 89-amino-acid polypeptide reads, in one-letter code: Probable Fe(2+)-trafficking protein (89 aa).

Belongs to the Fe(2+)-trafficking protein family.

In terms of biological role, could be a mediator in iron transactions between iron acquisition and iron-requiring processes, such as synthesis and/or repair of Fe-S clusters in biosynthetic enzymes. The polypeptide is Probable Fe(2+)-trafficking protein (Acinetobacter baumannii (strain AB0057)).